Reading from the N-terminus, the 231-residue chain is 5'-methylthioadenosine/S-adenosylhomocysteine nucleosidase (231 aa).

The Proton acceptor role is filled by E12. Substrate is bound by residues G78, M153, and 174–175 (ME). Catalysis depends on D198, which acts as the Proton donor.

Belongs to the PNP/UDP phosphorylase family. MtnN subfamily.

It catalyses the reaction S-adenosyl-L-homocysteine + H2O = S-(5-deoxy-D-ribos-5-yl)-L-homocysteine + adenine. The catalysed reaction is S-methyl-5'-thioadenosine + H2O = 5-(methylsulfanyl)-D-ribose + adenine. The enzyme catalyses 5'-deoxyadenosine + H2O = 5-deoxy-D-ribose + adenine. It functions in the pathway amino-acid biosynthesis; L-methionine biosynthesis via salvage pathway; S-methyl-5-thio-alpha-D-ribose 1-phosphate from S-methyl-5'-thioadenosine (hydrolase route): step 1/2. Catalyzes the irreversible cleavage of the glycosidic bond in both 5'-methylthioadenosine (MTA) and S-adenosylhomocysteine (SAH/AdoHcy) to adenine and the corresponding thioribose, 5'-methylthioribose and S-ribosylhomocysteine, respectively. Also cleaves 5'-deoxyadenosine, a toxic by-product of radical S-adenosylmethionine (SAM) enzymes, into 5-deoxyribose and adenine. In Bacillus anthracis (strain A0248), this protein is 5'-methylthioadenosine/S-adenosylhomocysteine nucleosidase.